The sequence spans 1167 residues: ATP-dependent helicase/deoxyribonuclease subunit B (1167 aa).

Residues Met1–Leu359 enclose the UvrD-like helicase ATP-binding domain. Gly8–Thr15 provides a ligand contact to ATP. In terms of domain architecture, UvrD-like helicase C-terminal spans Val282 to Asp588. The [4Fe-4S] cluster site is built by Cys803, Cys1125, Cys1128, and Cys1134.

This sequence belongs to the helicase family. AddB/RexB type 1 subfamily. Heterodimer of AddA and AddB. It depends on Mg(2+) as a cofactor. [4Fe-4S] cluster serves as cofactor.

Functionally, the heterodimer acts as both an ATP-dependent DNA helicase and an ATP-dependent, dual-direction single-stranded exonuclease. Recognizes the chi site generating a DNA molecule suitable for the initiation of homologous recombination. The AddB subunit has 5' -&gt; 3' nuclease activity but not helicase activity. This is ATP-dependent helicase/deoxyribonuclease subunit B from Geobacillus thermodenitrificans (strain NG80-2).